A 651-amino-acid polypeptide reads, in one-letter code: Kinesin-like protein KIF22-A (651 aa).

Residues 31–359 form the Kinesin motor domain; the sequence is RVRVAVRLRP…LNFAAKSKQI (329 aa). 116-123 lines the ATP pocket; sequence GPTGAGKT. The segment at 366–413 is disordered; it reads QETTQTVVQPAMKRPREETGHIAGSQKRKKSKNDSTESSPNSSMDTAG. The span at 401–410 shows a compositional bias: polar residues; the sequence is TESSPNSSMD. Residues 452–498 are a coiled coil; it reads KRERMALLKKWEESQMEIERLKEKQKELEQKAMEAEARLEKSNNSDL. The Important for regulated proteolytic degradation motif lies at 561–564; the sequence is GLEN.

The protein belongs to the TRAFAC class myosin-kinesin ATPase superfamily. Kinesin family. In terms of processing, ubiquitinated, leading to its subsequent proteasomal degradation.

It is found in the nucleus. Its subcellular location is the cytoplasm. The protein resides in the cytoskeleton. Kinesin family member that is involved in spindle formation and the movements of chromosomes during mitosis and meiosis. Binds to microtubules and to DNA. The protein is Kinesin-like protein KIF22-A (kif22-a) of Xenopus laevis (African clawed frog).